Reading from the N-terminus, the 214-residue chain is FMN-dependent NADH:quinone oxidoreductase 1 (214 aa).

FMN contacts are provided by residues S17 to S19 and S144 to G147.

It belongs to the azoreductase type 1 family. In terms of assembly, homodimer. The cofactor is FMN.

The catalysed reaction is 2 a quinone + NADH + H(+) = 2 a 1,4-benzosemiquinone + NAD(+). It catalyses the reaction N,N-dimethyl-1,4-phenylenediamine + anthranilate + 2 NAD(+) = 2-(4-dimethylaminophenyl)diazenylbenzoate + 2 NADH + 2 H(+). Its function is as follows. Quinone reductase that provides resistance to thiol-specific stress caused by electrophilic quinones. In terms of biological role, also exhibits azoreductase activity. Catalyzes the reductive cleavage of the azo bond in aromatic azo compounds to the corresponding amines. The protein is FMN-dependent NADH:quinone oxidoreductase 1 of Lactococcus lactis subsp. lactis (strain IL1403) (Streptococcus lactis).